A 955-amino-acid chain; its full sequence is MTEPGSYKETVNLPQTAFDMRANAVKREPELQKFWAENQIYENLSQENPGDPFILHDGPPYANGDLHIGHALNKILKDIINKYWMLQGRKVRYVPGWDCHGLPIELKVLQGMKSEQRAALTPLSLRQAAKEFALQTVERQKQSFKRYGVWGEWDNPYLTLKPEYEAAQIGVFGQMVLKGYIYRGLKPVYWSPSSQTALAEAELEYPEGHTSRSIYVSFALTSLSATAEAVLKDYLPNLKVAIWTTTPWTIPGNLAVALNPDLTYAVVEKDGSYLLVANELVERLETTLGVSLPIKTTIAGQALEHSTYQHPLFDRQGPLVMGDYVTTDSGTGLVHTAPGHGQEDYVVGQHYGLPILSPVDGNGRFTEEAGQFAGLKVLDEGNEAVIQALQQVGALLKEEAYSHKYPYDWRTKKPVILRATEQWFASVEGFREAALQAIAQVQWIPAQGENRITAMVSERSDWCISRQRNWGVPIPVFYDEETGEPLLNAETIAHVQAIVAEKGSDAWWELSIEELLPQAYRNNGRRYRKGTDTMDVWFDSGSSWAAVLEQREQLRYPAEMYLEGSDQHRGWFQSSLLTSVATHGIAPYKTVLTHGFVLDEQGRKMSKSLGNVVDPAIVIEGGKNQKEDPPYGADILRLWVSSVDYSSDVPLGKNILKQMADIYRKIRNTARFLLGNLHDFDPANNKVEYDRLPQLDRYMLHRIVEVFTEVNEAFTSYQFFRFFQTVQNFCVVDLSNFYLDIAKDRLYISAPDDFRRRSCQTVLWIALENLAKAIAPVVPHLAEDIWQFLPYPTPYKSVFEAGWVSLDATWTNPDPQLLETFEQVRLLRFKVNECLEKLRVNKVIGASLEAKVLLYIADPEKRQQWQNLNPPALAAISGVDELRYFFLTSQVELLNSPDQLSELKSEYRFEFGDSSGGVLPADGQKCDRCWNYSTYVGKDDKHLLLCERCVAVMER.

A 'HIGH' region motif is present at residues 60–70 (PYANGDLHIGH). E563 is an L-isoleucyl-5'-AMP binding site. The short motif at 604–608 (KMSKS) is the 'KMSKS' region element. ATP is bound at residue K607. Residues C926, C929, C946, and C949 each coordinate Zn(2+).

The protein belongs to the class-I aminoacyl-tRNA synthetase family. IleS type 1 subfamily. As to quaternary structure, monomer. Requires Zn(2+) as cofactor.

Its subcellular location is the cytoplasm. It catalyses the reaction tRNA(Ile) + L-isoleucine + ATP = L-isoleucyl-tRNA(Ile) + AMP + diphosphate. Catalyzes the attachment of isoleucine to tRNA(Ile). As IleRS can inadvertently accommodate and process structurally similar amino acids such as valine, to avoid such errors it has two additional distinct tRNA(Ile)-dependent editing activities. One activity is designated as 'pretransfer' editing and involves the hydrolysis of activated Val-AMP. The other activity is designated 'posttransfer' editing and involves deacylation of mischarged Val-tRNA(Ile). The protein is Isoleucine--tRNA ligase of Cyanothece sp. (strain PCC 7425 / ATCC 29141).